Consider the following 299-residue polypeptide: Tetrahydromethanopterin S-methyltransferase subunit E (299 aa).

6 consecutive transmembrane segments (helical) span residues 57–79 (AISG…AWAL), 95–115 (GVAA…RTVG), 133–153 (IGPI…AAYL), 158–178 (LGNP…VGAI), 237–257 (GLCF…GNII), and 262–282 (VTKT…AAGI).

This sequence belongs to the MtrE family. In terms of assembly, the complex is composed of 8 subunits; MtrA, MtrB, MtrC, MtrD, MtrE, MtrF, MtrG and MtrH.

The protein resides in the cell membrane. The enzyme catalyses 5-methyl-5,6,7,8-tetrahydromethanopterin + coenzyme M + 2 Na(+)(in) = 5,6,7,8-tetrahydromethanopterin + methyl-coenzyme M + 2 Na(+)(out). Its pathway is one-carbon metabolism; methanogenesis from CO(2); methyl-coenzyme M from 5,10-methylene-5,6,7,8-tetrahydromethanopterin: step 2/2. Functionally, part of a complex that catalyzes the formation of methyl-coenzyme M and tetrahydromethanopterin from coenzyme M and methyl-tetrahydromethanopterin. This is an energy-conserving, sodium-ion translocating step. The chain is Tetrahydromethanopterin S-methyltransferase subunit E from Methanococcus maripaludis (strain C5 / ATCC BAA-1333).